The following is a 540-amino-acid chain: Chaperonin GroEL (540 aa).

ATP is bound by residues 29-32, 86-90, Gly413, 476-478, and Asp492; these read TLGP, DGTTT, and NAA.

The protein belongs to the chaperonin (HSP60) family. Forms a cylinder of 14 subunits composed of two heptameric rings stacked back-to-back. Interacts with the co-chaperonin GroES.

The protein localises to the cytoplasm. It carries out the reaction ATP + H2O + a folded polypeptide = ADP + phosphate + an unfolded polypeptide.. Functionally, together with its co-chaperonin GroES, plays an essential role in assisting protein folding. The GroEL-GroES system forms a nano-cage that allows encapsulation of the non-native substrate proteins and provides a physical environment optimized to promote and accelerate protein folding. The polypeptide is Chaperonin GroEL (Streptococcus anginosus).